We begin with the raw amino-acid sequence, 102 residues long: Defensin (102 aa).

The first 25 residues, 1-25 (MKCATIVCTIAVVLAATLLNGSVQA), serve as a signal peptide directing secretion. A propeptide spanning residues 26 to 62 (APQEEAALSGGANLNTLLDELPEETHHAALENYRAKR) is cleaved from the precursor. Disulfide bonds link Cys-65–Cys-92, Cys-78–Cys-98, and Cys-82–Cys-100.

This sequence belongs to the invertebrate defensin family. Type 1 subfamily.

The protein resides in the secreted. Functionally, responsible for the anti Gram-positive activity of immune hemolymph. This chain is Defensin (Def1), found in Anopheles gambiae (African malaria mosquito).